The chain runs to 163 residues: Steroid receptor-associated and regulated protein (163 aa).

Over residues 1 to 16 (MAFSKDPRRTSLRDSS) the composition is skewed to basic and acidic residues. 2 disordered regions span residues 1 to 30 (MAFS…CAPK) and 96 to 149 (ALDG…EKVK). Positions 17 to 26 (VEMSSGTQPS) are enriched in polar residues.

As to quaternary structure, interacts with 14-3-3 proteins.

Functionally, may regulate the transcriptional function of androgen and estrogen receptors. In Mus musculus (Mouse), this protein is Steroid receptor-associated and regulated protein.